The sequence spans 423 residues: Gamma-glutamyl phosphate reductase (423 aa).

It belongs to the gamma-glutamyl phosphate reductase family.

The protein resides in the cytoplasm. The enzyme catalyses L-glutamate 5-semialdehyde + phosphate + NADP(+) = L-glutamyl 5-phosphate + NADPH + H(+). It functions in the pathway amino-acid biosynthesis; L-proline biosynthesis; L-glutamate 5-semialdehyde from L-glutamate: step 2/2. In terms of biological role, catalyzes the NADPH-dependent reduction of L-glutamate 5-phosphate into L-glutamate 5-semialdehyde and phosphate. The product spontaneously undergoes cyclization to form 1-pyrroline-5-carboxylate. This Burkholderia vietnamiensis (strain G4 / LMG 22486) (Burkholderia cepacia (strain R1808)) protein is Gamma-glutamyl phosphate reductase.